The primary structure comprises 338 residues: Holliday junction branch migration complex subunit RuvB (338 aa).

The segment at 1–182 (MDDRMVDQSQ…FGVHLRLEYY (182 aa)) is large ATPase domain (RuvB-L). ATP is bound by residues L21, R22, G63, K66, T67, T68, 129-131 (EDF), R172, Y182, and R219. T67 contacts Mg(2+). A small ATPAse domain (RuvB-S) region spans residues 183–253 (KESELKDIII…TTKRALQLLQ (71 aa)). A head domain (RuvB-H) region spans residues 256–338 (DYGLDYIDHK…KNGKRDNFEY (83 aa)). Residues R292, R311, and R316 each coordinate DNA.

The protein belongs to the RuvB family. As to quaternary structure, homohexamer. Forms an RuvA(8)-RuvB(12)-Holliday junction (HJ) complex. HJ DNA is sandwiched between 2 RuvA tetramers; dsDNA enters through RuvA and exits via RuvB. An RuvB hexamer assembles on each DNA strand where it exits the tetramer. Each RuvB hexamer is contacted by two RuvA subunits (via domain III) on 2 adjacent RuvB subunits; this complex drives branch migration. In the full resolvosome a probable DNA-RuvA(4)-RuvB(12)-RuvC(2) complex forms which resolves the HJ.

It is found in the cytoplasm. The catalysed reaction is ATP + H2O = ADP + phosphate + H(+). The RuvA-RuvB-RuvC complex processes Holliday junction (HJ) DNA during genetic recombination and DNA repair, while the RuvA-RuvB complex plays an important role in the rescue of blocked DNA replication forks via replication fork reversal (RFR). RuvA specifically binds to HJ cruciform DNA, conferring on it an open structure. The RuvB hexamer acts as an ATP-dependent pump, pulling dsDNA into and through the RuvAB complex. RuvB forms 2 homohexamers on either side of HJ DNA bound by 1 or 2 RuvA tetramers; 4 subunits per hexamer contact DNA at a time. Coordinated motions by a converter formed by DNA-disengaged RuvB subunits stimulates ATP hydrolysis and nucleotide exchange. Immobilization of the converter enables RuvB to convert the ATP-contained energy into a lever motion, pulling 2 nucleotides of DNA out of the RuvA tetramer per ATP hydrolyzed, thus driving DNA branch migration. The RuvB motors rotate together with the DNA substrate, which together with the progressing nucleotide cycle form the mechanistic basis for DNA recombination by continuous HJ branch migration. Branch migration allows RuvC to scan DNA until it finds its consensus sequence, where it cleaves and resolves cruciform DNA. The sequence is that of Holliday junction branch migration complex subunit RuvB from Staphylococcus carnosus (strain TM300).